Reading from the N-terminus, the 163-residue chain is NADH-quinone oxidoreductase subunit I (163 aa).

4Fe-4S ferredoxin-type domains are found at residues 54–84 (LRRYPNGEERCIACKLCEAVCPALAITIESD) and 94–123 (TRYDIDLTKCIFCGFCEEACPVDAIVETQI). Positions 64, 67, 70, 74, 103, 106, 109, and 113 each coordinate [4Fe-4S] cluster.

This sequence belongs to the complex I 23 kDa subunit family. NDH-1 is composed of 14 different subunits. Subunits NuoA, H, J, K, L, M, N constitute the membrane sector of the complex. The cofactor is [4Fe-4S] cluster.

It localises to the cell inner membrane. It carries out the reaction a quinone + NADH + 5 H(+)(in) = a quinol + NAD(+) + 4 H(+)(out). Its function is as follows. NDH-1 shuttles electrons from NADH, via FMN and iron-sulfur (Fe-S) centers, to quinones in the respiratory chain. The immediate electron acceptor for the enzyme in this species is believed to be ubiquinone. Couples the redox reaction to proton translocation (for every two electrons transferred, four hydrogen ions are translocated across the cytoplasmic membrane), and thus conserves the redox energy in a proton gradient. The protein is NADH-quinone oxidoreductase subunit I of Cupriavidus necator (strain ATCC 17699 / DSM 428 / KCTC 22496 / NCIMB 10442 / H16 / Stanier 337) (Ralstonia eutropha).